Consider the following 127-residue polypeptide: Promotilin (127 aa).

The N-terminal stretch at methionine 1 to glycine 25 is a signal peptide. Positions arginine 41–glutamate 67 are disordered.

The protein belongs to the motilin family. As to expression, present in the gut mucosa with the exception of the gastric corpus. Also present in medulla oblongata, nucleus of the solitary tract, hypophysis, spinal cord, hypothalamus, and cerebellum but not in the cerebral cortex.

It localises to the secreted. Its function is as follows. Plays an important role in the regulation of interdigestive gastrointestinal motility and indirectly causes rhythmic contraction of duodenal and colonic smooth muscle. This Cavia porcellus (Guinea pig) protein is Promotilin (MLN).